The following is a 509-amino-acid chain: Lysine--tRNA ligase (509 aa).

Positions 419 and 426 each coordinate Mg(2+).

The protein belongs to the class-II aminoacyl-tRNA synthetase family. Homodimer. Requires Mg(2+) as cofactor.

Its subcellular location is the cytoplasm. It catalyses the reaction tRNA(Lys) + L-lysine + ATP = L-lysyl-tRNA(Lys) + AMP + diphosphate. The polypeptide is Lysine--tRNA ligase (Methylobacillus flagellatus (strain ATCC 51484 / DSM 6875 / VKM B-1610 / KT)).